Here is a 319-residue protein sequence, read N- to C-terminus: Inositol phosphoceramide mannosyltransferase 1 (319 aa).

A helical membrane pass occupies residues 8–28 (LLLKGIPICGVILLILWGYSL). 2 N-linked (GlcNAc...) asparagine glycosylation sites follow: N115 and N198. Helical transmembrane passes span 211 to 231 (PTVF…KYLL) and 279 to 299 (VLFF…RVVF).

The protein belongs to the glycosyltransferase 32 family.

It is found in the golgi apparatus. It localises to the cis-Golgi network membrane. Its subcellular location is the trans-Golgi network membrane. Functionally, with imt2 and imt3, is required for the synthesis of mannosyl phosphorylinositol ceramide (MIPC). Catalyzes the addition of mannosyl to phosphorylinositol ceramide (IPC). MIPC is essential for cell morphology, cell-surface distribution of ergosterol, localization for plasma-membrane transporters, and lipid-raft-mediated endocytosis of plasma membrane proteins to the vacuole. The sequence is that of Inositol phosphoceramide mannosyltransferase 1 (imt1) from Schizosaccharomyces pombe (strain 972 / ATCC 24843) (Fission yeast).